Consider the following 487-residue polypeptide: Betaine aldehyde dehydrogenase 1 (487 aa).

The K(+) site is built by Ser26, Ile27, and Asp93. 150 to 152 is a binding site for NAD(+); sequence GAW. The active-site Charge relay system is the Lys162. Residues 176–179 and 229–232 contribute to the NAD(+) site; these read KPSE and SVPT. Residue Leu244 coordinates K(+). Glu250 (proton acceptor) is an active-site residue. Residues Gly252, Cys284, and Glu384 each contribute to the NAD(+) site. The active-site Nucleophile is the Cys284. Cys284 is modified (cysteine sulfenic acid (-SOH)). K(+) is bound by residues Lys454 and Gly457. Catalysis depends on Glu461, which acts as the Charge relay system.

Belongs to the aldehyde dehydrogenase family. In terms of assembly, dimer of dimers. The cofactor is K(+).

It carries out the reaction betaine aldehyde + NAD(+) + H2O = glycine betaine + NADH + 2 H(+). It functions in the pathway amine and polyamine biosynthesis; betaine biosynthesis via choline pathway; betaine from betaine aldehyde: step 1/1. In terms of biological role, involved in the biosynthesis of the osmoprotectant glycine betaine. Catalyzes the irreversible oxidation of betaine aldehyde to the corresponding acid. The chain is Betaine aldehyde dehydrogenase 1 from Rhizobium meliloti (strain 1021) (Ensifer meliloti).